Here is a 261-residue protein sequence, read N- to C-terminus: Putative cysteine protease YopT-like y4zC (261 aa).

Polar residues predominate over residues 1–15; sequence MHSPISGSFTSSTQV. Disordered stretches follow at residues 1–48 and 54–73; these read MHSP…CPDK and SKPQASDPNNPSTSSPARPS. The span at 61–73 shows a compositional bias: low complexity; that stretch reads PNNPSTSSPARPS. Residues cysteine 93, histidine 205, and aspartate 220 contribute to the active site.

It belongs to the peptidase C58 family.

Functionally, potential cysteine protease, which may play a central role after invasion of host cell. This chain is Putative cysteine protease YopT-like y4zC, found in Sinorhizobium fredii (strain NBRC 101917 / NGR234).